A 425-amino-acid polypeptide reads, in one-letter code: Dihydroorotase (425 aa).

Residues histidine 61 and histidine 63 each coordinate Zn(2+). Substrate contacts are provided by residues 63 to 65 and asparagine 95; that span reads HLR. Residues aspartate 153, histidine 180, and histidine 233 each contribute to the Zn(2+) site. Asparagine 279 contributes to the substrate binding site. Aspartate 306 serves as a coordination point for Zn(2+). Residue aspartate 306 is part of the active site. Histidine 310 is a substrate binding site.

The protein belongs to the metallo-dependent hydrolases superfamily. DHOase family. Class I DHOase subfamily. It depends on Zn(2+) as a cofactor.

The enzyme catalyses (S)-dihydroorotate + H2O = N-carbamoyl-L-aspartate + H(+). It participates in pyrimidine metabolism; UMP biosynthesis via de novo pathway; (S)-dihydroorotate from bicarbonate: step 3/3. Catalyzes the reversible cyclization of carbamoyl aspartate to dihydroorotate. This chain is Dihydroorotase, found in Geobacter sp. (strain M21).